Reading from the N-terminus, the 223-residue chain is Neurotrophic factor BDNF precursor form (223 aa).

A signal peptide spans 1–5 (SCMKA). A propeptide spanning residues 6-114 (APMKEVSIRG…AANMSMRVRR (109 aa)) is cleaved from the precursor. Asn-107 carries N-linked (GlcNAc...) asparagine glycosylation. 2 cysteine pairs are disulfide-bonded: Cys-127/Cys-194 and Cys-172/Cys-223.

This sequence belongs to the NGF-beta family.

The protein resides in the secreted. Functionally, promotes the survival of neuronal populations that are all located either in the central nervous system or directly connected to it. This is Neurotrophic factor BDNF precursor form (BDNF) from Eryx johnii (Indian red sand boa).